Reading from the N-terminus, the 699-residue chain is tRNA 5-methylaminomethyl-2-thiouridine biosynthesis bifunctional protein MnmC (699 aa).

The segment at 1-247 (MPAVSRPLPP…KREMLCGEIA (247 aa)) is tRNA (mnm(5)s(2)U34)-methyltransferase. The segment at 275–699 (IGAGLAGTSV…QPSPTTTETP (425 aa)) is FAD-dependent cmnm(5)s(2)U34 oxidoreductase. Positions 675-699 (RGNATLSTSSPNDDAQPSPTTTETP) are disordered.

In the N-terminal section; belongs to the methyltransferase superfamily. tRNA (mnm(5)s(2)U34)-methyltransferase family. It in the C-terminal section; belongs to the DAO family. FAD serves as cofactor.

It localises to the cytoplasm. The catalysed reaction is 5-aminomethyl-2-thiouridine(34) in tRNA + S-adenosyl-L-methionine = 5-methylaminomethyl-2-thiouridine(34) in tRNA + S-adenosyl-L-homocysteine + H(+). Catalyzes the last two steps in the biosynthesis of 5-methylaminomethyl-2-thiouridine (mnm(5)s(2)U) at the wobble position (U34) in tRNA. Catalyzes the FAD-dependent demodification of cmnm(5)s(2)U34 to nm(5)s(2)U34, followed by the transfer of a methyl group from S-adenosyl-L-methionine to nm(5)s(2)U34, to form mnm(5)s(2)U34. This chain is tRNA 5-methylaminomethyl-2-thiouridine biosynthesis bifunctional protein MnmC, found in Chromohalobacter salexigens (strain ATCC BAA-138 / DSM 3043 / CIP 106854 / NCIMB 13768 / 1H11).